A 250-amino-acid polypeptide reads, in one-letter code: Cell division protein ZapD (250 aa).

The protein belongs to the ZapD family. In terms of assembly, interacts with FtsZ.

The protein resides in the cytoplasm. Functionally, cell division factor that enhances FtsZ-ring assembly. Directly interacts with FtsZ and promotes bundling of FtsZ protofilaments, with a reduction in FtsZ GTPase activity. This Pectobacterium atrosepticum (strain SCRI 1043 / ATCC BAA-672) (Erwinia carotovora subsp. atroseptica) protein is Cell division protein ZapD.